We begin with the raw amino-acid sequence, 297 residues long: Aspartate carbamoyltransferase catalytic subunit (297 aa).

Residues R51 and T52 each contribute to the carbamoyl phosphate site. K79 is a binding site for L-aspartate. Carbamoyl phosphate contacts are provided by R101, H129, and Q132. L-aspartate is bound by residues R162 and R216. Carbamoyl phosphate contacts are provided by G257 and P258.

The protein belongs to the aspartate/ornithine carbamoyltransferase superfamily. ATCase family. As to quaternary structure, heterododecamer (2C3:3R2) of six catalytic PyrB chains organized as two trimers (C3), and six regulatory PyrI chains organized as three dimers (R2).

The enzyme catalyses carbamoyl phosphate + L-aspartate = N-carbamoyl-L-aspartate + phosphate + H(+). Its pathway is pyrimidine metabolism; UMP biosynthesis via de novo pathway; (S)-dihydroorotate from bicarbonate: step 2/3. In terms of biological role, catalyzes the condensation of carbamoyl phosphate and aspartate to form carbamoyl aspartate and inorganic phosphate, the committed step in the de novo pyrimidine nucleotide biosynthesis pathway. The chain is Aspartate carbamoyltransferase catalytic subunit from Myxococcus xanthus (strain DK1622).